The following is a 392-amino-acid chain: MVSFISISQGVSLCLLVSSMMLGSSAVPVSGKSGSSNTAVSASDNAALPPLISSRCAPPSNKGSKSDLQAEPYNMQKNTEWYESHGGNLTSIGKRDDNLVGGMTLDLPSDAPPISLSSSTNSASDGGKVVAATTAQIQEFTKYAGIAATAYCRSVVPGNKWDCVQCQKWVPDGKIITTFTSLLSDTNGYVLRSDKQKTIYLVFRGTNSFRSAITDIVFNFSDYKPVKGAKVHAGFLSSYEQVVNDYFPVVQEQLTAHPTYKVIVTGHSLGGAQALLAGMDLYQREPRLSPKNLSIFTVGGPRVGNPTFAYYVESTGIPFQRTVHKRDIVPHVPPQSFGFLHPGVESWIKSGTSNVQICTSEIETKDCSNSIVPFTSILDHLSYFDINEGSCL.

A signal peptide spans 1 to 26 (MVSFISISQGVSLCLLVSSMMLGSSA). The propeptide occupies 27–95 (VPVSGKSGSS…GGNLTSIGKR (69 aa)). The tract at residues 50–69 (PLISSRCAPPSNKGSKSDLQ) is disordered. Disulfide bonds link C152–C391, C163–C166, and C358–C367. The active-site Nucleophile is the S268. The active-site Charge relay system is D327. D379 is a binding site for Ca(2+). H380 acts as the Charge relay system in catalysis.

Belongs to the AB hydrolase superfamily. Lipase family.

It localises to the secreted. The protein resides in the extracellular space. It carries out the reaction a triacylglycerol + H2O = a diacylglycerol + a fatty acid + H(+). Lipase activity is maximal at a lipid-water interface (interfacial activation), probably by an induced conformational change that results in an increased accessibility of the active site to the substrate. Functionally, hydrolyzes ester bonds of triglycerides as well as of their derived partial glycerides with a strong 1,3-positional specificity. The sequence is that of Lipase from Rhizopus niveus.